Reading from the N-terminus, the 119-residue chain is MSEKKGRKEEVVTREYTINLHRRLHSCTFKKKAPKAIKEIRKFAEKEMGTKDVRVDVKLNKQIWSKGIRGPPRRIRVRVARKRNDDEDAKEEFFSLVTVAEIPAEGLSGLGTKIIEEED.

This sequence belongs to the eukaryotic ribosomal protein eL31 family.

In Arabidopsis thaliana (Mouse-ear cress), this protein is Large ribosomal subunit protein eL31y (RPL31B).